Consider the following 509-residue polypeptide: MSSVLKAYERFTLTQELQDQSEEGTIPPTTLKPVIRVFILTSNNPELRSRLLLFCLRIVLSNGARDSHRFGALLTMFSLPSATMLNHVKLADQSPEADIERVEIDGFEEGSFRLIPNARSGMSRGEINAYAALAEDLPDTLNHATPFVDSEVEGTAWDEIETFLDMCYSVLMQAWIVTCKCMTAPDQPAASIEKRLQKYRQQGRINPRYLLQPEARRIIQNVIRKGMVVRHFLTFELQLARAQSLVSNRYYAMVGDVGKYIENCGMGGFFLTLKYALGTRWPTLALAAFSGELTKLKSLMALYQTLGEQARYLALLESPHLMDFAAANYPLLYSYAMGIGYVLDVNMRNYAFSRSYMNKTYFQLGMETARKQQGAVDMRMAEDLGLTQAERTEMANTLAKLTTANRGADTRGGVNPFSSVTGTTQVPAAATGDTLESYMAADRLRQRYADAGTHDDEMPPLEEEEEDDTSAGPRTGPTLEQVALDIQNAAVGAPIHTDDLNAALGDLDI.

The interval 1–404 (MSSVLKAYER…ANTLAKLTTA (404 aa)) is ncore. 5 residues coordinate RNA: Lys180, Arg195, Tyr260, Tyr350, and Arg354. The ntail stretch occupies residues 405–509 (NRGADTRGGV…LNAALGDLDI (105 aa)). A disordered region spans residues 452-477 (GTHDDEMPPLEEEEEDDTSAGPRTGP). The span at 458-469 (MPPLEEEEEDDT) shows a compositional bias: acidic residues.

The protein belongs to the paramyxoviruses nucleocapsid family. In terms of assembly, homomultimer; forms the nucleocapsid. Binds to the viral genomic RNA. N0 interacts with the phosphoprotein (via N-terminus); this interaction allows P to chaperon N0 to avoid N polymerization before encapsidation. Interacts as N-RNA template with the phosphoprotein (via C-terminus); this interaction positions the polymerase on the template.

The protein resides in the virion. It localises to the host cytoplasm. In terms of biological role, forms the helical nucleocapsid (NC), protecting the genome from nucleases. The encapsidated genomic RNA serves as template for transcription and replication; encapsidation by N is coupled to RNA synthesis. Forms the encapsidation complex with the phosphoprotein protein P. Before encapsidation, the newly synthesized free N protein, so-called N0, is chaperoned by P. The sequence is that of Nucleoprotein (NP) from Canis lupus familiaris (Dog).